The sequence spans 344 residues: Arginine N-succinyltransferase (344 aa).

Leucine 125 is a binding site for succinyl-CoA. Histidine 229 (proton donor) is an active-site residue.

This sequence belongs to the arginine N-succinyltransferase family.

The enzyme catalyses succinyl-CoA + L-arginine = N(2)-succinyl-L-arginine + CoA + H(+). It participates in amino-acid degradation; L-arginine degradation via AST pathway; L-glutamate and succinate from L-arginine: step 1/5. Functionally, catalyzes the transfer of succinyl-CoA to arginine to produce N(2)-succinylarginine. The protein is Arginine N-succinyltransferase of Enterobacter sp. (strain 638).